The following is a 100-amino-acid chain: uncharacterized protein (100 aa).

Its subcellular location is the mitochondrion. This is an uncharacterized protein from Arabidopsis thaliana (Mouse-ear cress).